We begin with the raw amino-acid sequence, 122 residues long: ATP synthase epsilon chain (122 aa).

The span at 97-112 (EDLKSERELTRSRGDA) shows a compositional bias: basic and acidic residues. The segment at 97-122 (EDLKSERELTRSRGDAALRATRRLNS) is disordered.

It belongs to the ATPase epsilon chain family. In terms of assembly, F-type ATPases have 2 components, CF(1) - the catalytic core - and CF(0) - the membrane proton channel. CF(1) has five subunits: alpha(3), beta(3), gamma(1), delta(1), epsilon(1). CF(0) has three main subunits: a, b and c.

It is found in the cell membrane. In terms of biological role, produces ATP from ADP in the presence of a proton gradient across the membrane. In Corynebacterium aurimucosum (strain ATCC 700975 / DSM 44827 / CIP 107346 / CN-1) (Corynebacterium nigricans), this protein is ATP synthase epsilon chain.